The sequence spans 63 residues: U7-theraphotoxin-Cg1a (63 aa).

The N-terminal stretch at 1-21 is a signal peptide; sequence MKTSILFVIFGLALLFALSVA. The propeptide occupies 22–31; sequence IEMEEEETDR. Disulfide bonds link Cys-33–Cys-47, Cys-40–Cys-52, and Cys-46–Cys-59.

Expressed by the venom gland.

The protein resides in the secreted. Functionally, inhibits preferentially tetrodotoxin-insensitive sodium currents (Nav) on rat cardiac myocytes (IC(50) is 0.26 uM) and has weaker inhibition activity toward tetrodotoxin-sensitive sodium currents on rat dorsal root ganglion (DRG) sensory neurons (IC(50) is 0.83 uM) and on cockroach dorsal unpaired median (DUM) neurons (IC(50) is 1.19 uM). Has no significant effect on potassium currents on DRG neurons. In Chilobrachys guangxiensis (Chinese earth tiger tarantula), this protein is U7-theraphotoxin-Cg1a.